Consider the following 334-residue polypeptide: Ornithine carbamoyltransferase (334 aa).

Residues 56–59, glutamine 83, arginine 107, and 134–137 contribute to the carbamoyl phosphate site; these read STRT and HPTQ. Residues asparagine 168, aspartate 232, and 236–237 contribute to the L-ornithine site; that span reads SM. Residues 274 to 275 and arginine 320 each bind carbamoyl phosphate; that span reads CL.

The protein belongs to the aspartate/ornithine carbamoyltransferase superfamily. OTCase family. As to quaternary structure, homotrimer.

Its subcellular location is the cytoplasm. It catalyses the reaction carbamoyl phosphate + L-ornithine = L-citrulline + phosphate + H(+). Its pathway is amino-acid biosynthesis; L-arginine biosynthesis; L-arginine from L-ornithine and carbamoyl phosphate: step 1/3. Its function is as follows. Reversibly catalyzes the transfer of the carbamoyl group from carbamoyl phosphate (CP) to the N(epsilon) atom of ornithine (ORN) to produce L-citrulline. The sequence is that of Ornithine carbamoyltransferase (argI) from Salmonella typhimurium (strain LT2 / SGSC1412 / ATCC 700720).